Consider the following 200-residue polypeptide: TATA-box-binding protein (200 aa).

2 consecutive repeat copies span residues 25–101 (LQNI…ARII) and 115–192 (IQNI…YPVL).

The protein belongs to the TBP family. Belongs to the TFIID complex together with the TBP-associated factors (TAFs). Binds DNA as monomer.

It is found in the nucleus. Functionally, general transcription factor that functions at the core of the DNA-binding multiprotein factor TFIID. Binding of TFIID to the TATA box is the initial transcriptional step of the pre-initiation complex (PIC), playing a role in the activation of eukaryotic genes transcribed by RNA polymerase II. The chain is TATA-box-binding protein from Mesembryanthemum crystallinum (Common ice plant).